The following is a 343-amino-acid chain: Glutamine synthetase (343 aa).

In terms of domain architecture, GS beta-grasp spans 3-87; the sequence is FKAEYIWIDG…CEVLNIDLTP (85 aa). The GS catalytic domain maps to 92-343; that stretch reads TRAALAEVAE…CSALEKAGQV (252 aa). The Mg(2+) site is built by E113, E115, E174, and E181. An L-glutamate-binding site is contributed by E279.

The protein belongs to the glutamine synthetase family. As to quaternary structure, homooctamer and homotetramer. The cofactor is Mg(2+).

The protein resides in the cytoplasm. It catalyses the reaction L-glutamate + NH4(+) + ATP = L-glutamine + ADP + phosphate + H(+). Functionally, catalyzes the ATP-dependent biosynthesis of glutamine from glutamate and ammonia. In Streptomyces viridochromogenes, this protein is Glutamine synthetase.